The chain runs to 452 residues: Pup--protein ligase (452 aa).

Position 9 (Glu9) interacts with Mg(2+). Arg53 is an ATP binding site. Residue Tyr55 coordinates Mg(2+). Asp57 functions as the Proton acceptor in the catalytic mechanism. Glu63 contacts Mg(2+). ATP contacts are provided by Thr66 and Trp419.

The protein belongs to the Pup ligase/Pup deamidase family. Pup-conjugating enzyme subfamily.

It carries out the reaction ATP + [prokaryotic ubiquitin-like protein]-L-glutamate + [protein]-L-lysine = ADP + phosphate + N(6)-([prokaryotic ubiquitin-like protein]-gamma-L-glutamyl)-[protein]-L-lysine.. It functions in the pathway protein degradation; proteasomal Pup-dependent pathway. The protein operates within protein modification; protein pupylation. Functionally, catalyzes the covalent attachment of the prokaryotic ubiquitin-like protein modifier Pup to the proteasomal substrate proteins, thereby targeting them for proteasomal degradation. This tagging system is termed pupylation. The ligation reaction involves the side-chain carboxylate of the C-terminal glutamate of Pup and the side-chain amino group of a substrate lysine. This Mycolicibacterium gilvum (strain PYR-GCK) (Mycobacterium gilvum (strain PYR-GCK)) protein is Pup--protein ligase.